The chain runs to 214 residues: Ribosomal RNA large subunit methyltransferase E (214 aa).

S-adenosyl-L-methionine-binding residues include Gly-60, Trp-62, Asp-86, Asp-102, and Asp-127. Lys-167 serves as the catalytic Proton acceptor.

It belongs to the class I-like SAM-binding methyltransferase superfamily. RNA methyltransferase RlmE family.

It is found in the cytoplasm. The catalysed reaction is uridine(2552) in 23S rRNA + S-adenosyl-L-methionine = 2'-O-methyluridine(2552) in 23S rRNA + S-adenosyl-L-homocysteine + H(+). In terms of biological role, specifically methylates the uridine in position 2552 of 23S rRNA at the 2'-O position of the ribose in the fully assembled 50S ribosomal subunit. This is Ribosomal RNA large subunit methyltransferase E from Janthinobacterium sp. (strain Marseille) (Minibacterium massiliensis).